The sequence spans 117 residues: Immunoglobulin heavy variable 4-4 (117 aa).

The N-terminal stretch at 1–19 (MKHLWFFLLLVAAPRWVLS) is a signal peptide. Residues 20-44 (QVQLQESGPGLVKPSGTLSLTCAVS) form a framework-1 region. In terms of domain architecture, Ig-like spans 20-117 (QVQLQESGPG…ADTAVYYCAR (98 aa)). Cys-41 and Cys-115 are joined by a disulfide. The complementarity-determining-1 stretch occupies residues 45–53 (GGSISSSNW). A framework-2 region spans residues 54–70 (WSWVRQPPGKGLEWIGE). The complementarity-determining-2 stretch occupies residues 71 to 77 (IYHSGST). Residues 78–115 (NYNPSLKSRVTISVDKSKNQFSLKLSSVTAADTAVYYC) form a framework-3 region. The tract at residues 116–117 (AR) is complementarity-determining-3.

As to quaternary structure, immunoglobulins are composed of two identical heavy chains and two identical light chains; disulfide-linked.

It is found in the secreted. The protein resides in the cell membrane. Its function is as follows. V region of the variable domain of immunoglobulin heavy chains that participates in the antigen recognition. Immunoglobulins, also known as antibodies, are membrane-bound or secreted glycoproteins produced by B lymphocytes. In the recognition phase of humoral immunity, the membrane-bound immunoglobulins serve as receptors which, upon binding of a specific antigen, trigger the clonal expansion and differentiation of B lymphocytes into immunoglobulins-secreting plasma cells. Secreted immunoglobulins mediate the effector phase of humoral immunity, which results in the elimination of bound antigens. The antigen binding site is formed by the variable domain of one heavy chain, together with that of its associated light chain. Thus, each immunoglobulin has two antigen binding sites with remarkable affinity for a particular antigen. The variable domains are assembled by a process called V-(D)-J rearrangement and can then be subjected to somatic hypermutations which, after exposure to antigen and selection, allow affinity maturation for a particular antigen. The protein is Immunoglobulin heavy variable 4-4 of Homo sapiens (Human).